The following is a 448-amino-acid chain: Ribosomal protein uS12 methylthiotransferase RimO (448 aa).

Residues 16-126 (PKISFVSLGC…VVAAVHEAVP (111 aa)) form the MTTase N-terminal domain. Residues cysteine 25, cysteine 61, cysteine 90, cysteine 157, cysteine 161, and cysteine 164 each contribute to the [4Fe-4S] cluster site. The region spanning 143–380 (LTPRHYAYLK…METQNGIALR (238 aa)) is the Radical SAM core domain. A TRAM domain is found at 383-448 (RAKVGKRLPV…EAYDLYGSVA (66 aa)).

It belongs to the methylthiotransferase family. RimO subfamily. [4Fe-4S] cluster serves as cofactor.

The protein resides in the cytoplasm. The catalysed reaction is L-aspartate(89)-[ribosomal protein uS12]-hydrogen + (sulfur carrier)-SH + AH2 + 2 S-adenosyl-L-methionine = 3-methylsulfanyl-L-aspartate(89)-[ribosomal protein uS12]-hydrogen + (sulfur carrier)-H + 5'-deoxyadenosine + L-methionine + A + S-adenosyl-L-homocysteine + 2 H(+). Its function is as follows. Catalyzes the methylthiolation of an aspartic acid residue of ribosomal protein uS12. This Methylobacterium radiotolerans (strain ATCC 27329 / DSM 1819 / JCM 2831 / NBRC 15690 / NCIMB 10815 / 0-1) protein is Ribosomal protein uS12 methylthiotransferase RimO.